Here is an 845-residue protein sequence, read N- to C-terminus: RNA-directed RNA polymerase (845 aa).

A GTP-binding site is contributed by 248-255; the sequence is GLPYIGKT. Positions 384-588 constitute a RdRp catalytic domain; it reads MIYADNIYIL…ENERLIASAA (205 aa). Disordered regions lie at residues 686–706 and 799–845; these read PLDS…KKTL and AGKS…RRNQ. Basic residues predominate over residues 833-845; that stretch reads KNAKRREKQRRNQ.

In terms of assembly, interacts with VP3 in the cytoplasm. Exists in multiple phosphorylated forms.

Its subcellular location is the virion. It carries out the reaction RNA(n) + a ribonucleoside 5'-triphosphate = RNA(n+1) + diphosphate. In terms of biological role, RNA-dependent RNA polymerase which is found both free and covalently attached to the genomic RNA. May also contain guanylyl and methyl transferase activities. The sequence is that of RNA-directed RNA polymerase (VP1) from Oncorhynchus mykiss (Rainbow trout).